A 156-amino-acid chain; its full sequence is Gene 55 protein (156 aa).

Positions 132 to 156 (KRRWSGGNASSHEERMRGPFTEVAE) are disordered.

This Mycobacterium phage L5 (Mycobacteriophage L5) protein is Gene 55 protein (55).